Reading from the N-terminus, the 338-residue chain is Biotin synthase (338 aa).

The Radical SAM core domain occupies 50–277 (QAVQLSTLMS…KSYVRLSAGR (228 aa)). The [4Fe-4S] cluster site is built by cysteine 65, cysteine 69, and cysteine 72. Positions 109, 140, 200, and 272 each coordinate [2Fe-2S] cluster.

This sequence belongs to the radical SAM superfamily. Biotin synthase family. In terms of assembly, homodimer. [4Fe-4S] cluster serves as cofactor. The cofactor is [2Fe-2S] cluster.

The enzyme catalyses (4R,5S)-dethiobiotin + (sulfur carrier)-SH + 2 reduced [2Fe-2S]-[ferredoxin] + 2 S-adenosyl-L-methionine = (sulfur carrier)-H + biotin + 2 5'-deoxyadenosine + 2 L-methionine + 2 oxidized [2Fe-2S]-[ferredoxin]. Its pathway is cofactor biosynthesis; biotin biosynthesis; biotin from 7,8-diaminononanoate: step 2/2. Catalyzes the conversion of dethiobiotin (DTB) to biotin by the insertion of a sulfur atom into dethiobiotin via a radical-based mechanism. This chain is Biotin synthase, found in Actinobacillus succinogenes (strain ATCC 55618 / DSM 22257 / CCUG 43843 / 130Z).